Reading from the N-terminus, the 284-residue chain is MSVPRIDGETSLVGLIGHPVSHSLSPQMHNASFAALGLNYVYVPLDVPPEELEAGVRGLRALGFRGFNVTMPHKERVCALVDRLDEAARISGAVNTVAVEEDGSLLGMNTDGSGFLLACREAGVEPSGRVALVAGAGGAAAAVAVALLRAGLSELRIANRTPGRALGLRERLGGLGGRVEVFPLSGLAEAAGGADILVNATYLGMRAGDPLPFPEELLRPGVAVCDAVYRPGKSTALVRAARRRGLAAVPGELMLLYQGVEAQRAWTGVDPDVGAMRRALSGEG.

Shikimate is bound by residues 23 to 25 (SLS) and threonine 70. Lysine 74 acts as the Proton acceptor in catalysis. An NADP(+)-binding site is contributed by glutamate 86. Asparagine 95 and aspartate 111 together coordinate shikimate. Residues 135–139 (GAGGA), 159–164 (NRTPGR), and alanine 227 contribute to the NADP(+) site. Tyrosine 229 serves as a coordination point for shikimate. An NADP(+)-binding site is contributed by glycine 251.

It belongs to the shikimate dehydrogenase family. In terms of assembly, homodimer.

The enzyme catalyses shikimate + NADP(+) = 3-dehydroshikimate + NADPH + H(+). The protein operates within metabolic intermediate biosynthesis; chorismate biosynthesis; chorismate from D-erythrose 4-phosphate and phosphoenolpyruvate: step 4/7. In terms of biological role, involved in the biosynthesis of the chorismate, which leads to the biosynthesis of aromatic amino acids. Catalyzes the reversible NADPH linked reduction of 3-dehydroshikimate (DHSA) to yield shikimate (SA). The protein is Shikimate dehydrogenase (NADP(+)) of Rubrobacter xylanophilus (strain DSM 9941 / JCM 11954 / NBRC 16129 / PRD-1).